The sequence spans 203 residues: MIIYKYGKIMHVNTNYLILDHNGEGDLIYAPNISRFKKDELRKIFISQIENEYTKVTYGFDNFKELVIFEDLIEIQGLGPKTAISILNIGWENVINYVATANKGALGKIPYVSSKIANAIIFSYQDKYAKFMKKLTSDEAAKIKVPASSENENKFLDTMKMLGFKQQQIKFALDKIELNDDIETCVENAIKLISQQQHETSRV.

Residues Met-1 to Asp-61 are domain I. A domain II region spans residues Asn-62–Glu-139. Residues Ala-140–Ala-147 are flexible linker. A domain III region spans residues Ala-147–Val-203.

It belongs to the RuvA family. In terms of assembly, homotetramer. Forms an RuvA(8)-RuvB(12)-Holliday junction (HJ) complex. HJ DNA is sandwiched between 2 RuvA tetramers; dsDNA enters through RuvA and exits via RuvB. An RuvB hexamer assembles on each DNA strand where it exits the tetramer. Each RuvB hexamer is contacted by two RuvA subunits (via domain III) on 2 adjacent RuvB subunits; this complex drives branch migration. In the full resolvosome a probable DNA-RuvA(4)-RuvB(12)-RuvC(2) complex forms which resolves the HJ.

It localises to the cytoplasm. Functionally, the RuvA-RuvB-RuvC complex processes Holliday junction (HJ) DNA during genetic recombination and DNA repair, while the RuvA-RuvB complex plays an important role in the rescue of blocked DNA replication forks via replication fork reversal (RFR). RuvA specifically binds to HJ cruciform DNA, conferring on it an open structure. The RuvB hexamer acts as an ATP-dependent pump, pulling dsDNA into and through the RuvAB complex. HJ branch migration allows RuvC to scan DNA until it finds its consensus sequence, where it cleaves and resolves the cruciform DNA. The chain is Holliday junction branch migration complex subunit RuvA from Metamycoplasma arthritidis (strain 158L3-1) (Mycoplasma arthritidis).